We begin with the raw amino-acid sequence, 68 residues long: Erythrodihydroneopterin triphosphate synthetase (68 aa).

Ser66 carries the phosphoserine modification.

The protein is Erythrodihydroneopterin triphosphate synthetase of Cavia porcellus (Guinea pig).